Consider the following 330-residue polypeptide: FKBP12-interacting protein of 37 kDa (330 aa).

Residue M1 is modified to N-acetylmethionine. Residues 1–12 (MEFSSQDDDFGG) show a composition bias toward acidic residues. Residues 1 to 43 (MEFSSQDDDFGGDDSAANATRASGNRRSFGDLEDDEDDIFGST) form a disordered region. Residues 17–26 (ANATRASGNR) are compositionally biased toward polar residues. Positions 56–308 (SLRGSLKNCK…KGLEIVSELV (253 aa)) form a coiled coil.

Belongs to the fl(2)d family. As to quaternary structure, forms homodimers. Interacts with MTA/EMB1706. Interacts with FKBP12; interaction is inhibited by the immunosuppressive drug FK506. Interacts with VIR. Associates with MTA, MTB, VIR and HAKAI to form the m6A writer complex which is essential for adenosine methylation at specific mRNA sequences. Ubiquitously expressed with higher levels in primary and lateral roots, leaves, trichomes, and in pollen grains (at protein level).

It localises to the nucleus speckle. The protein localises to the nucleus. It is found in the nucleoplasm. Its function is as follows. Probable regulatory subunit of the N6-methyltransferase complex, a multiprotein complex that mediates N6-methyladenosine (m6A) methylation at the 5'-[AG]GAC-3' consensus sites of some mRNAs. Associates with MTA, MTB, VIR and HAKAI to form the m6A writer complex which is essential for adenosine methylation at specific mRNA sequences. N6-methyladenosine (m6A) plays a role in mRNA stability, processing, translation efficiency and editing. Essential protein required during endosperm development and embryogenesis. Involved in endoreduplication, especially in trichomes. May play a role in splicing events. The chain is FKBP12-interacting protein of 37 kDa from Arabidopsis thaliana (Mouse-ear cress).